Consider the following 306-residue polypeptide: uncharacterized protein (306 aa).

The next 8 helical transmembrane spans lie at 7-27 (LESW…GYLA), 30-50 (VGII…FMAL), 68-88 (LFIT…LFAL), 95-115 (ADHV…TLFI), 144-164 (AIGV…LMSF), 194-214 (IGAI…VLSV), 232-252 (IAIM…GLIF), and 274-294 (TIPF…NVAP).

The protein localises to the cell membrane. This is an uncharacterized protein from Mycoplasma genitalium (strain ATCC 33530 / DSM 19775 / NCTC 10195 / G37) (Mycoplasmoides genitalium).